Reading from the N-terminus, the 26-residue chain is M-poneritoxin-Ng1c (26 aa).

Expressed by the venom gland.

Its subcellular location is the secreted. It localises to the target cell membrane. Has a broad spectrum of activity against both Gram-positive and Gram-negative bacteria and S.cerevisiae. Has insecticidal and hemolytic activities. May act by disrupting the integrity of the bacterial cell membrane. The protein is M-poneritoxin-Ng1c of Neoponera goeldii (Ponerine ant).